The primary structure comprises 182 residues: MTEPTGITELLLSRIRDVADYPEPGVVFKDITPLLADPGAFAALTDALAEAAGRTGATKVVGLEARGFILGAPVALRAGLGFIPVRKAGKLPGATLSQAYDLEYGSAEIEVHAEDLTAGDRVLVVDDVLATGGTAEASLELIRRAGAEVAGLAVLMELGFLGGRARLEPALAGAPLEALLTV.

This sequence belongs to the purine/pyrimidine phosphoribosyltransferase family. In terms of assembly, homodimer.

It is found in the cytoplasm. It catalyses the reaction AMP + diphosphate = 5-phospho-alpha-D-ribose 1-diphosphate + adenine. The protein operates within purine metabolism; AMP biosynthesis via salvage pathway; AMP from adenine: step 1/1. Its function is as follows. Catalyzes a salvage reaction resulting in the formation of AMP, that is energically less costly than de novo synthesis. The polypeptide is Adenine phosphoribosyltransferase (Streptomyces coelicolor (strain ATCC BAA-471 / A3(2) / M145)).